The following is a 336-amino-acid chain: UDP-3-O-acylglucosamine N-acyltransferase (336 aa).

Residue H233 is the Proton acceptor of the active site.

This sequence belongs to the transferase hexapeptide repeat family. LpxD subfamily. As to quaternary structure, homotrimer.

The catalysed reaction is a UDP-3-O-[(3R)-3-hydroxyacyl]-alpha-D-glucosamine + a (3R)-hydroxyacyl-[ACP] = a UDP-2-N,3-O-bis[(3R)-3-hydroxyacyl]-alpha-D-glucosamine + holo-[ACP] + H(+). It functions in the pathway bacterial outer membrane biogenesis; LPS lipid A biosynthesis. In terms of biological role, catalyzes the N-acylation of UDP-3-O-acylglucosamine using 3-hydroxyacyl-ACP as the acyl donor. Is involved in the biosynthesis of lipid A, a phosphorylated glycolipid that anchors the lipopolysaccharide to the outer membrane of the cell. The protein is UDP-3-O-acylglucosamine N-acyltransferase of Helicobacter pylori (strain HPAG1).